Here is a 259-residue protein sequence, read N- to C-terminus: MNILLVNDDGVTAPGILCAARYLSKEHYVVVSAPESEQSAVGHGITLRFPLWARKLDINEPFEMYAVSGTPADCVKIGLDVIYKDKGIMPDVVISGINRGENLGTDVVYSGTVSGALEGAIAGVPSIAISVADFKDPIYETGARFLLNFLKEFDVKRIPRFTALNINVPSVPYEQIKGWKLTRQSKRRYEDYFEKRIDPYGKDYYWMLGDIIEDDPDPKADYKALKEGYISVTPITIFMTNEELLKELEGIYGDGKNFR.

Residues Asp8, Asp9, Ser39, and Asn98 each contribute to the a divalent metal cation site.

It belongs to the SurE nucleotidase family. It depends on a divalent metal cation as a cofactor.

It is found in the cytoplasm. It carries out the reaction a ribonucleoside 5'-phosphate + H2O = a ribonucleoside + phosphate. Nucleotidase that shows phosphatase activity on nucleoside 5'-monophosphates. The sequence is that of 5'-nucleotidase SurE from Fervidobacterium nodosum (strain ATCC 35602 / DSM 5306 / Rt17-B1).